Reading from the N-terminus, the 227-residue chain is Cytochrome c oxidase subunit 2 (227 aa).

Residues 1 to 14 are Mitochondrial intermembrane-facing; the sequence is MAHPVQLGFQDAAS. The chain crosses the membrane as a helical span at residues 15–45; that stretch reads PIMEELLYFHDHTLMIMFLISSLVLYIISLM. Over 46–59 the chain is Mitochondrial matrix; the sequence is LTTKLTHTSTMDAQ. A helical membrane pass occupies residues 60 to 87; that stretch reads EVETVWTILPAAILILIALPSLRILYMM. Residues 88-227 are Mitochondrial intermembrane-facing; that stretch reads DEITSPSLTL…HFEEWLLFTL (140 aa). The Cu cation site is built by histidine 161, cysteine 196, glutamate 198, cysteine 200, histidine 204, and methionine 207. Glutamate 198 is a binding site for Mg(2+).

It belongs to the cytochrome c oxidase subunit 2 family. As to quaternary structure, component of the cytochrome c oxidase (complex IV, CIV), a multisubunit enzyme composed of 14 subunits. The complex is composed of a catalytic core of 3 subunits MT-CO1, MT-CO2 and MT-CO3, encoded in the mitochondrial DNA, and 11 supernumerary subunits COX4I, COX5A, COX5B, COX6A, COX6B, COX6C, COX7A, COX7B, COX7C, COX8 and NDUFA4, which are encoded in the nuclear genome. The complex exists as a monomer or a dimer and forms supercomplexes (SCs) in the inner mitochondrial membrane with NADH-ubiquinone oxidoreductase (complex I, CI) and ubiquinol-cytochrome c oxidoreductase (cytochrome b-c1 complex, complex III, CIII), resulting in different assemblies (supercomplex SCI(1)III(2)IV(1) and megacomplex MCI(2)III(2)IV(2)). Found in a complex with TMEM177, COA6, COX18, COX20, SCO1 and SCO2. Interacts with TMEM177 in a COX20-dependent manner. Interacts with COX20. Interacts with COX16. Cu cation serves as cofactor.

It is found in the mitochondrion inner membrane. It catalyses the reaction 4 Fe(II)-[cytochrome c] + O2 + 8 H(+)(in) = 4 Fe(III)-[cytochrome c] + 2 H2O + 4 H(+)(out). Functionally, component of the cytochrome c oxidase, the last enzyme in the mitochondrial electron transport chain which drives oxidative phosphorylation. The respiratory chain contains 3 multisubunit complexes succinate dehydrogenase (complex II, CII), ubiquinol-cytochrome c oxidoreductase (cytochrome b-c1 complex, complex III, CIII) and cytochrome c oxidase (complex IV, CIV), that cooperate to transfer electrons derived from NADH and succinate to molecular oxygen, creating an electrochemical gradient over the inner membrane that drives transmembrane transport and the ATP synthase. Cytochrome c oxidase is the component of the respiratory chain that catalyzes the reduction of oxygen to water. Electrons originating from reduced cytochrome c in the intermembrane space (IMS) are transferred via the dinuclear copper A center (CU(A)) of subunit 2 and heme A of subunit 1 to the active site in subunit 1, a binuclear center (BNC) formed by heme A3 and copper B (CU(B)). The BNC reduces molecular oxygen to 2 water molecules using 4 electrons from cytochrome c in the IMS and 4 protons from the mitochondrial matrix. In Varecia variegata (Black-and-white ruffed lemur), this protein is Cytochrome c oxidase subunit 2 (MT-CO2).